Here is a 409-residue protein sequence, read N- to C-terminus: Elongation factor Tu, chloroplastic (409 aa).

The tr-type G domain maps to 10 to 214 (KQHVNIGTIG…NVDTYIPTPV (205 aa)). The G1 stretch occupies residues 19 to 26 (GHVDHGKT). Position 19 to 26 (19 to 26 (GHVDHGKT)) interacts with GTP. Thr26 contacts Mg(2+). The segment at 60 to 64 (GITIN) is G2. The G3 stretch occupies residues 81–84 (DCPG). Residues 81 to 85 (DCPGH) and 136 to 139 (NKED) each bind GTP. Residues 136–139 (NKED) form a G4 region. The interval 174 to 176 (SAL) is G5.

The protein belongs to the TRAFAC class translation factor GTPase superfamily. Classic translation factor GTPase family. EF-Tu/EF-1A subfamily.

Its subcellular location is the plastid. The protein resides in the chloroplast. The enzyme catalyses GTP + H2O = GDP + phosphate + H(+). GTP hydrolase that promotes the GTP-dependent binding of aminoacyl-tRNA to the A-site of ribosomes during protein biosynthesis. This is Elongation factor Tu, chloroplastic (tufA) from Tupiella akineta (Green alga).